The sequence spans 165 residues: Lipoprotein signal peptidase (165 aa).

Transmembrane regions (helical) follow at residues 12 to 32 (WLWV…LILQ), 70 to 90 (WFFA…MYRS), and 102 to 122 (ALII…GFVV). Catalysis depends on residues aspartate 123 and aspartate 141. Residues 137–157 (FNLADSAICIGAALIVLEGFL) traverse the membrane as a helical segment.

The protein belongs to the peptidase A8 family.

The protein localises to the cell inner membrane. The enzyme catalyses Release of signal peptides from bacterial membrane prolipoproteins. Hydrolyzes -Xaa-Yaa-Zaa-|-(S,diacylglyceryl)Cys-, in which Xaa is hydrophobic (preferably Leu), and Yaa (Ala or Ser) and Zaa (Gly or Ala) have small, neutral side chains.. It participates in protein modification; lipoprotein biosynthesis (signal peptide cleavage). In terms of biological role, this protein specifically catalyzes the removal of signal peptides from prolipoproteins. The protein is Lipoprotein signal peptidase of Klebsiella aerogenes (strain ATCC 13048 / DSM 30053 / CCUG 1429 / JCM 1235 / KCTC 2190 / NBRC 13534 / NCIMB 10102 / NCTC 10006 / CDC 819-56) (Enterobacter aerogenes).